Here is a 136-residue protein sequence, read N- to C-terminus: Blasticidin-S acetyltransferase (136 aa).

One can recognise an N-acetyltransferase domain in the interval 1-136 (MLSLPRLQTV…ITSHLLVKEL (136 aa)).

Functionally, confers resistance to blasticidin S antibiotic. The polypeptide is Blasticidin-S acetyltransferase (bls) (Streptomyces morookaense (Streptoverticillium morookaense)).